Reading from the N-terminus, the 598-residue chain is MQTFNADLAIIGAGGAGLRAAIAAAEANPQLKIALISKVYPMRSHTVAAEGGSAAVTQDHDSFDFHFHDTVAGGDWLCEQDVVDQFVQSCPREMTQLEQWGCPWSRKPDGSVNVRRFGGMKIERTWFAADKTGFHMLHTLFQTSLKYPQIQRFDEHFVLDILVDDGQARGLVAINMMEGTLVQIRANAVIMATGGAGRVYRYNTNGGIVTGDGMGMAFRHGVPLRDMEFVQYHPTGLPGSGILMTEGCRGEGGIMVNKDGYRYLQDYGMGPETPLGQPKNKYMELGPRDKVSQAFWHEWRAGRTISTPLGDVVYLDLRHLGEKKLKERLPFICELAQAYVGVDPVKEPIPIRPTAHYTMGGIETDQQCETRIKGLFAAGECSSVGLHGANRLGSNSLAELVVFGRIAGEHATQRSLESAPANASALDAQARDVEQRLHTLMKQEGTESWAKIRDEMGISMEEGCGIYRTTELMQKTLDKLAELKERFKRVKITDHSSVFNTDLLYTIELGHSLDVAQCMAHSAINRKESRGAHQRLDEGCTERDDVNFLKHTLAFYNPEGAPRLEYSDVKITKLPPAKRVYGGEADAQEKSDKEQANG.

FAD-binding positions include 12-16 (GAGGA), 36-38 (ISK), 44-52 (SHTVAAEGG), 156-158 (HFV), and Asp212. Position 45 is a tele-8alpha-FAD histidine (His45). Catalysis depends on residues His233 and Arg249. FAD-binding positions include 356–357 (HY), Glu380, and 391–397 (RLGSNSL). The segment at 577-598 (AKRVYGGEADAQEKSDKEQANG) is disordered. Basic and acidic residues predominate over residues 587-598 (AQEKSDKEQANG).

Belongs to the FAD-dependent oxidoreductase 2 family. FRD/SDH subfamily. As to quaternary structure, part of an enzyme complex containing four subunits: a flavoprotein (FrdA), an iron-sulfur protein (FrdB), and two hydrophobic anchor proteins (FrdC and FrdD). Interacts with SdhE. Requires FAD as cofactor.

The protein localises to the cell inner membrane. It catalyses the reaction a quinone + succinate = fumarate + a quinol. The enzyme catalyses a menaquinone + succinate = a menaquinol + fumarate. Its function is as follows. Two distinct, membrane-bound, FAD-containing enzymes are responsible for the catalysis of fumarate and succinate interconversion; the fumarate reductase is used in anaerobic growth, and the succinate dehydrogenase is used in aerobic growth. The polypeptide is Fumarate reductase flavoprotein subunit (Serratia sp. (strain ATCC 39006) (Prodigiosinella confusarubida)).